The sequence spans 180 residues: uncharacterized protein (180 aa).

Positions 138–180 (SVMPVPMPQQNSDNGSTPHIVDSSKSKDKSSNDGDNGVFTGDE) are disordered. The span at 145 to 154 (PQQNSDNGST) shows a compositional bias: polar residues. A compositionally biased stretch (basic and acidic residues) spans 159–169 (DSSKSKDKSSN).

This is an uncharacterized protein from Acidianus filamentous virus 2 (isolate Italy/Pozzuoli) (AFV-2).